The chain runs to 430 residues: GTPase Obg (430 aa).

In terms of domain architecture, Obg spans 1–158 (MFVDQVKISL…LDVSLELKLL (158 aa)). The tract at residues 118–145 (KGGRGGRGNSRFATPRNPAPDFSEKGEP) is disordered. Positions 159–329 (ADVGLVGFPS…LLYAIADKLE (171 aa)) constitute an OBG-type G domain. Residues 165-172 (GFPSVGKS), 190-194 (FTTIK), 212-215 (DLPG), 282-285 (NKMD), and 310-312 (STI) contribute to the GTP site. Mg(2+)-binding residues include S172 and T192. Residues 352 to 430 (KHTPSQDKFT…ILGGEFEFVE (79 aa)) form the OCT domain.

This sequence belongs to the TRAFAC class OBG-HflX-like GTPase superfamily. OBG GTPase family. In terms of assembly, monomer. Mg(2+) serves as cofactor.

The protein resides in the cytoplasm. Its function is as follows. An essential GTPase which binds GTP, GDP and possibly (p)ppGpp with moderate affinity, with high nucleotide exchange rates and a fairly low GTP hydrolysis rate. Plays a role in control of the cell cycle, stress response, ribosome biogenesis and in those bacteria that undergo differentiation, in morphogenesis control. The sequence is that of GTPase Obg from Staphylococcus aureus (strain bovine RF122 / ET3-1).